The following is a 207-amino-acid chain: Large ribosomal subunit protein uL3 (207 aa).

The protein belongs to the universal ribosomal protein uL3 family. As to quaternary structure, part of the 50S ribosomal subunit. Forms a cluster with proteins L14 and L19.

One of the primary rRNA binding proteins, it binds directly near the 3'-end of the 23S rRNA, where it nucleates assembly of the 50S subunit. In Thermotoga maritima (strain ATCC 43589 / DSM 3109 / JCM 10099 / NBRC 100826 / MSB8), this protein is Large ribosomal subunit protein uL3.